The chain runs to 79 residues: Small ribosomal subunit protein uS11 (79 aa).

Serine 14 carries the phosphoserine modification. Glycyl lysine isopeptide (Lys-Gly) (interchain with G-Cter in SUMO2) cross-links involve residues lysine 59 and lysine 61.

It belongs to the universal ribosomal protein uS11 family. In terms of assembly, component of the small ribosomal subunit. Part of the small subunit (SSU) processome, composed of more than 70 proteins and the RNA chaperone small nucleolar RNA (snoRNA) U3.

The protein resides in the cytoplasm. It localises to the nucleus. It is found in the nucleolus. Functionally, component of the small ribosomal subunit. The ribosome is a large ribonucleoprotein complex responsible for the synthesis of proteins in the cell. Part of the small subunit (SSU) processome, first precursor of the small eukaryotic ribosomal subunit. During the assembly of the SSU processome in the nucleolus, many ribosome biogenesis factors, an RNA chaperone and ribosomal proteins associate with the nascent pre-rRNA and work in concert to generate RNA folding, modifications, rearrangements and cleavage as well as targeted degradation of pre-ribosomal RNA by the RNA exosome. This is Small ribosomal subunit protein uS11 (RPS14) from Sus scrofa (Pig).